The chain runs to 147 residues: Large ribosomal subunit protein uL15 (147 aa).

Basic and acidic residues predominate over residues 1 to 13 (MELHSLKAAEGSR). The disordered stretch occupies residues 1–57 (MELHSLKAAEGSRKVRNRVGRGTSSGNGKTSGRGQKGQKSRSGGGVRPGFEGGQTEL). Gly residues-rich tracts occupy residues 23–35 (TSSG…GRGQ) and 42–52 (SGGGVRPGFEG).

The protein belongs to the universal ribosomal protein uL15 family. In terms of assembly, part of the 50S ribosomal subunit.

Binds to the 23S rRNA. The sequence is that of Large ribosomal subunit protein uL15 from Lactococcus lactis subsp. cremoris (strain MG1363).